The following is a 168-amino-acid chain: MGFVLFSQLPSFLLVSTLLLFLVISHSCRAQNSQQDYLDAHNTARADVGVEPLTWDDQVAAYAQNYASQLAADCNLVHSHGQYGENLAEGSGDFMTAAKAVEMWVDEKQYYDHDSNTCAQGQVCGHYTQVVWRNSVRVGCARVQCNNGGYVVSCNYDPPGNYRGESPY.

The signal sequence occupies residues 1-30 (MGFVLFSQLPSFLLVSTLLLFLVISHSCRA). Residues 38 to 156 (LDAHNTARAD…NGGYVVSCNY (119 aa)) enclose the SCP domain.

The protein belongs to the CRISP family. In terms of processing, three disulfide bonds are present.

The protein resides in the vacuole. Its function is as follows. Probably involved in the defense reaction of plants against pathogens. The polypeptide is Pathogenesis-related protein 1A (Nicotiana tabacum (Common tobacco)).